Reading from the N-terminus, the 396-residue chain is Pectinesterase (396 aa).

Positions 1–26 (MQSTTLYLKTAAFLGGCSLFAATALA) are cleaved as a signal peptide. T174 provides a ligand contact to substrate. The Proton donor role is filled by D232. D259 functions as the Nucleophile in the catalytic mechanism. The substrate site is built by R324 and W326.

The protein belongs to the pectinesterase family.

The protein resides in the secreted. The enzyme catalyses [(1-&gt;4)-alpha-D-galacturonosyl methyl ester](n) + n H2O = [(1-&gt;4)-alpha-D-galacturonosyl](n) + n methanol + n H(+). Its pathway is glycan metabolism; pectin degradation; 2-dehydro-3-deoxy-D-gluconate from pectin: step 1/5. Functionally, involved in maceration and soft-rotting of plant tissue. This Ralstonia solanacearum (Pseudomonas solanacearum) protein is Pectinesterase (pme).